Reading from the N-terminus, the 762-residue chain is uncharacterized protein (762 aa).

Residues 1 to 26 (MENLKSASPEEDSPRHGDNMGKPKRI) form a disordered region. Residues 12–21 (DSPRHGDNMG) show a composition bias toward basic and acidic residues. Residues 30–57 (CDMCRKRKIRCDGKQPACSNCVSHGIPC) constitute a DNA-binding region (zn(2)-C6 fungal-type). The segment at 647–668 (QSHVPPRISSNHSDTSVKSNSP) is disordered.

It is found in the nucleus. This is an uncharacterized protein from Schizosaccharomyces pombe (strain 972 / ATCC 24843) (Fission yeast).